The chain runs to 623 residues: Fanconi anemia group G protein homolog (623 aa).

TPR repeat units lie at residues 251–284 (VQVYTALGACLRKMGNPQRALLYLTEALKVGTTC), 349–382 (SQAKHLLASRCLQTGRAEDAAEHYLDLLAMLLGG), 458–491 (SATHLLQGQAWSQLKAQKEALSEFSQCLELLFRT), and 517–550 (VAALISRGLEWVASGQDTKALSDFLLSVQICPGN).

In terms of assembly, belongs to the multisubunit FA complex composed of FANCA, FANCB, FANCC, FANCE, FANCF, FANCG, FANCL/PHF9 and FANCM. In complex with FANCF, FANCA and FANCL, but not with FANCC, nor FANCE, interacts with HES1; this interaction may be essential for the stability and nuclear localization of FA core complex proteins. The complex with FANCC and FANCG may also include EIF2AK2 and HSP70. As to expression, highest expression levels in spleen, thymus and testis.

It is found in the nucleus. DNA repair protein that may operate in a postreplication repair or a cell cycle checkpoint function. May be implicated in interstrand DNA cross-link repair and in the maintenance of normal chromosome stability. Candidate tumor suppressor gene. This chain is Fanconi anemia group G protein homolog (Fancg), found in Mus musculus (Mouse).